The primary structure comprises 237 residues: BTB/POZ domain-containing protein KCTD6 (237 aa).

The interaction with ANK1 isoform Mu17 stretch occupies residues 1 to 104; the sequence is MDNGDWGYMM…FYQIEPLIQC (104 aa). The tract at residues 10-110 is interaction with CUL3; the sequence is MTDPVTLNVG…LIQCLNDPKP (101 aa). The BTB domain occupies 12 to 81; it reads DPVTLNVGGH…LRTSELTLPL (70 aa). The tract at residues 113–187 is interaction with USP21; sequence PMDTFEEVVE…TFGPCDYHQE (75 aa).

In terms of assembly, homopentamer. Interacts with KCTD11; KCTD6 and KCTD11 may associate in pentameric assemblies. Interacts (via BTB domain) with CUL3; initially a 4:4 stoichiometry has been reported, however, electron microscopy revealed pentameric states with a five-pointed pinwheel shape. The interaction with CUL3 is indicative for a participation in a BCR (BTB-CUL3-RBX1) E3 ubiquitin-protein ligase complex. Interacts with HDAC1; probably indirect as the interaction is requires the presence of KCTD11. Interacts with USP21 (preferentially catalytic inactive form). Interacts with ANK1 isoform Mu17; detected in striated muscle. Interacts with USP11. As to expression, highly expressed in cerebellum and brain. Expression is down-regulated in medulloblastoma.

Its subcellular location is the cytoplasm. The protein resides in the myofibril. It localises to the sarcomere. It is found in the m line. Its pathway is protein modification; protein ubiquitination. In terms of biological role, probable substrate-specific adapter of a BCR (BTB-CUL3-RBX1) E3 ubiquitin-protein ligase complex mediating the ubiquitination and subsequent proteasomal degradation of target proteins. Promotes the ubiquitination of HDAC1; the function seems to depend on KCTD11:KCTD6 oligomerization. Can function as antagonist of the Hedgehog pathway by affecting the nuclear transfer of transcription factor GLI1; the function probably occurs via HDAC1 down-regulation, keeping GLI1 acetylated and inactive. Inhibits cell growth and tumorigenicity of medulloblastoma (MDB). Involved in regulating protein levels of ANK1 isoform Mu17 probably implicating CUL3-dependent proteasomal degradation. The sequence is that of BTB/POZ domain-containing protein KCTD6 (KCTD6) from Homo sapiens (Human).